Consider the following 474-residue polypeptide: Sulfide dehydrogenase subunit alpha (474 aa).

A propeptide spanning residues 1–2 (MP) is cleaved from the precursor. The [4Fe-4S] cluster site is built by Cys-42, Cys-45, Cys-52, and Cys-56. Positions 101, 107, and 111 each coordinate [3Fe-4S] cluster.

As to quaternary structure, heterodimer of alpha and beta subunits. It depends on FAD as a cofactor. [3Fe-4S] cluster serves as cofactor. The cofactor is [4Fe-4S] cluster.

It localises to the cytoplasm. It carries out the reaction n sulfur + hydrogen sulfide + NADP(+) = (n+1) sulfur + NADPH. It catalyses the reaction 2 reduced [2Fe-2S]-[ferredoxin] + NADP(+) + H(+) = 2 oxidized [2Fe-2S]-[ferredoxin] + NADPH. A bifunctional enzyme that catalyzes the reduction of elemental sulfur or polysulfide to hydrogen sulfide with NADPH as electron donor. Also functions as a reduced ferredoxin:NADP oxidoreductase with a very high affinity for reduced ferredoxin. Exhibits a broad specificity for various physiological and non-physiological substrates with varied reduction potentials such as methyl viologen, benzyl viologen, FAD, FMN, methylene blue, 2,6-dichlorophenolindophenol (DCIP), cytochrome C and ferricyanide with highest preference for benzyl viologen. Does not reduce fumarate, succinate, nitrate, nitrite, sulfate, sulfite or protons. Does not possess any hydrogenase activity or NADPH-dependent glutamate synthase activity. This Pyrococcus furiosus (strain ATCC 43587 / DSM 3638 / JCM 8422 / Vc1) protein is Sulfide dehydrogenase subunit alpha.